Here is a 292-residue protein sequence, read N- to C-terminus: 2-methylisocitrate lyase (292 aa).

44–46 (SGA) serves as a coordination point for substrate. Asp-84 and Asp-86 together coordinate Mg(2+). Substrate is bound by residues 121-122 (CG), Arg-156, Glu-186, 208-210 (NMT), Arg-239, and Arg-268.

Belongs to the isocitrate lyase/PEP mutase superfamily. Methylisocitrate lyase family. As to quaternary structure, homotetramer; dimer of dimers. It depends on Mg(2+) as a cofactor.

It carries out the reaction (2S,3R)-3-hydroxybutane-1,2,3-tricarboxylate = pyruvate + succinate. It participates in organic acid metabolism; propanoate degradation. Its function is as follows. Involved in the catabolism of short chain fatty acids (SCFA) via the 2-methylcitrate cycle I (propionate degradation route). Catalyzes the thermodynamically favored C-C bond cleavage of (2R,3S)-2-methylisocitrate to yield pyruvate and succinate via an alpha-carboxy-carbanion intermediate. This chain is 2-methylisocitrate lyase, found in Shewanella oneidensis (strain ATCC 700550 / JCM 31522 / CIP 106686 / LMG 19005 / NCIMB 14063 / MR-1).